Consider the following 134-residue polypeptide: Ribonuclease P protein component 2 (134 aa).

This sequence belongs to the eukaryotic/archaeal RNase P protein component 2 family. In terms of assembly, consists of a catalytic RNA component and at least 4-5 protein subunits. Forms a subcomplex with Rnp3 which stimulates the catalytic RNA.

It localises to the cytoplasm. The enzyme catalyses Endonucleolytic cleavage of RNA, removing 5'-extranucleotides from tRNA precursor.. Functionally, part of ribonuclease P, a protein complex that generates mature tRNA molecules by cleaving their 5'-ends. In Methanocaldococcus jannaschii (strain ATCC 43067 / DSM 2661 / JAL-1 / JCM 10045 / NBRC 100440) (Methanococcus jannaschii), this protein is Ribonuclease P protein component 2.